Here is a 290-residue protein sequence, read N- to C-terminus: Elongation factor Ts (290 aa).

Residues 81 to 84 (TDFV) form an involved in Mg(2+) ion dislocation from EF-Tu region.

It belongs to the EF-Ts family.

It is found in the cytoplasm. In terms of biological role, associates with the EF-Tu.GDP complex and induces the exchange of GDP to GTP. It remains bound to the aminoacyl-tRNA.EF-Tu.GTP complex up to the GTP hydrolysis stage on the ribosome. The polypeptide is Elongation factor Ts (Saccharophagus degradans (strain 2-40 / ATCC 43961 / DSM 17024)).